A 470-amino-acid polypeptide reads, in one-letter code: uncharacterized protein (470 aa).

Residues 418–453 are a coiled coil; that stretch reads SECCEEQEEKEKKKEKEKEKKKEKDDDDDQQNNNNN. Residues 423–470 are disordered; sequence EQEEKEKKKEKEKEKKKEKDDDDDQQNNNNNDQNGLGLGLGLNFGLNL. Basic and acidic residues predominate over residues 426 to 441; that stretch reads EKEKKKEKEKEKKKEK. Over residues 448–457 the composition is skewed to low complexity; it reads QNNNNNDQNG.

This is an uncharacterized protein from Acidianus bottle-shaped virus (isolate Italy/Pozzuoli) (ABV).